The chain runs to 322 residues: MDHHAMYRTAEFNKTTVRLLAEFIEKTGQNATIVNMDSFLEFFAYLNPTAPIPTVPEIEKQLLLKSPIRCIVCGMETESDSAVTLSIDNASIILTATVIGYCRDPSDAVNQIRKESLRACTKHFNSIFHVIFEGLQIENTYCAHHAKYSLANRWCKVYTMIRSSLGEQFTKFDVRNFKSILQSFLDTFGEIDDDKKDKESSHFDECFEEMDSENVEIKMESPQEEAAEKSKFSENLVEVKLEPIETHELDKTISDFSSSDIIDSSQKLQQNGFPEKVEQMDKYSNKLKDEASDKKYEKPGKKDYVEEEGYWAPITDSEDDEA.

Residues 264–322 are disordered; sequence SSQKLQQNGFPEKVEQMDKYSNKLKDEASDKKYEKPGKKDYVEEEGYWAPITDSEDDEA. The span at 275–304 shows a compositional bias: basic and acidic residues; that stretch reads EKVEQMDKYSNKLKDEASDKKYEKPGKKDY.

Widely expressed throughout embryonic development. Expressed in the six multipotent ventral ectodermal blast cells, P3.p-P8.p, which generate the vulva and in their descendants throughout vulval development.

The protein localises to the nucleus. Its function is as follows. Required for translation, stability and/or localization of lin-15a. The sequence is that of Protein lin-56 (lin-56) from Caenorhabditis elegans.